Consider the following 333-residue polypeptide: Protein farnesyltransferase/geranylgeranyltransferase type-1 subunit alpha (333 aa).

PFTA repeat units lie at residues 61 to 95, 96 to 130, 132 to 166, 167 to 200, and 207 to 241; these read LSSR…SLKV, DLHV…KLGP, ARNS…NLGG, WEDE…RSPV, and MRES…DEST.

It belongs to the protein prenyltransferase subunit alpha family. Heterodimer of FTA and FTB (farnesyltransferase). Heterodimer of an alpha and a beta subunit. Mg(2+) is required as a cofactor.

It carries out the reaction L-cysteinyl-[protein] + (2E,6E)-farnesyl diphosphate = S-(2E,6E)-farnesyl-L-cysteinyl-[protein] + diphosphate. The enzyme catalyses geranylgeranyl diphosphate + L-cysteinyl-[protein] = S-geranylgeranyl-L-cysteinyl-[protein] + diphosphate. Its function is as follows. Essential subunit of both the farnesyltransferase and the geranylgeranyltransferase complex. Contributes to the transfer of a farnesyl or geranylgeranyl moiety from farnesyl or geranylgeranyl diphosphate to a cysteine at the fourth position from the C-terminus of several proteins having the C-terminal sequence Cys-aliphatic-aliphatic-X. This is Protein farnesyltransferase/geranylgeranyltransferase type-1 subunit alpha (FTA) from Pisum sativum (Garden pea).